A 610-amino-acid chain; its full sequence is Chitinase 63 (610 aa).

The first 30 residues, Met-1–Ala-30, serve as a signal peptide directing secretion. A CBM2 domain is found at Ala-31–Ser-134. Disordered stretches follow at residues Lys-125–Ile-153 and Ala-208–Gly-239. The 86-residue stretch at Ala-144–Gly-229 folds into the Fibronectin type-III domain. Residues Asp-213–Val-224 are compositionally biased toward polar residues. The GH18 domain occupies Glu-241–Lys-610. Residues Asp-313–Gln-314 and Gly-340–Thr-343 each bind chitin. Glu-383 acts as the Proton donor in catalysis. Residues Tyr-384, Met-450–Asp-453, and Trp-590 each bind chitin.

This sequence belongs to the glycosyl hydrolase 18 family. Chitinase class II subfamily.

The enzyme catalyses Random endo-hydrolysis of N-acetyl-beta-D-glucosaminide (1-&gt;4)-beta-linkages in chitin and chitodextrins.. The protein is Chitinase 63 (chtA) of Streptomyces plicatus.